Reading from the N-terminus, the 299-residue chain is ATP phosphoribosyltransferase (299 aa).

The protein belongs to the ATP phosphoribosyltransferase family. Long subfamily. Equilibrium between an active dimeric form, an inactive hexameric form and higher aggregates. Interconversion between the various forms is largely reversible and is influenced by the natural substrates and inhibitors of the enzyme. It depends on Mg(2+) as a cofactor.

It is found in the cytoplasm. The catalysed reaction is 1-(5-phospho-beta-D-ribosyl)-ATP + diphosphate = 5-phospho-alpha-D-ribose 1-diphosphate + ATP. The protein operates within amino-acid biosynthesis; L-histidine biosynthesis; L-histidine from 5-phospho-alpha-D-ribose 1-diphosphate: step 1/9. Its activity is regulated as follows. Feedback inhibited by histidine. Functionally, catalyzes the condensation of ATP and 5-phosphoribose 1-diphosphate to form N'-(5'-phosphoribosyl)-ATP (PR-ATP). Has a crucial role in the pathway because the rate of histidine biosynthesis seems to be controlled primarily by regulation of HisG enzymatic activity. The chain is ATP phosphoribosyltransferase from Salmonella dublin (strain CT_02021853).